Here is a 598-residue protein sequence, read N- to C-terminus: NADH-quinone oxidoreductase subunit C/D (598 aa).

Residues 1–189 form an NADH dehydrogenase I subunit C region; the sequence is MTDLTTSDSL…DPYVLTKQKE (189 aa). The interval 213-598 is NADH dehydrogenase I subunit D; sequence DFMFLNLGPN…IDFVMSDVDR (386 aa).

It in the N-terminal section; belongs to the complex I 30 kDa subunit family. This sequence in the C-terminal section; belongs to the complex I 49 kDa subunit family. In terms of assembly, NDH-1 is composed of 13 different subunits. Subunits NuoB, CD, E, F, and G constitute the peripheral sector of the complex.

The protein localises to the cell inner membrane. It carries out the reaction a quinone + NADH + 5 H(+)(in) = a quinol + NAD(+) + 4 H(+)(out). Functionally, NDH-1 shuttles electrons from NADH, via FMN and iron-sulfur (Fe-S) centers, to quinones in the respiratory chain. The immediate electron acceptor for the enzyme in this species is believed to be ubiquinone. Couples the redox reaction to proton translocation (for every two electrons transferred, four hydrogen ions are translocated across the cytoplasmic membrane), and thus conserves the redox energy in a proton gradient. This is NADH-quinone oxidoreductase subunit C/D from Yersinia pseudotuberculosis serotype O:1b (strain IP 31758).